The primary structure comprises 383 residues: Dimethylsulfoniopropionate lyase 3 (383 aa).

This sequence belongs to the aspartate/glutamate racemases family. ALMA1 subfamily. Homotetramer.

It catalyses the reaction S,S-dimethyl-beta-propiothetin = acrylate + dimethyl sulfide + H(+). Mediates cleavage of dimethylsulfoniopropionate (DMSP) into dimethyl sulfide (DMS) and acrylate. DMS is the principal form by which sulfur is transported from oceans to the atmosphere and is a key component of the ocean sulfur cycle. The chain is Dimethylsulfoniopropionate lyase 3 from Emiliania huxleyi (strain CCMP1516).